The sequence spans 62 residues: Toxin Tst2 (62 aa).

The LCN-type CS-alpha/beta domain maps to 1-62; the sequence is KEGYAMDHEG…KVWDYATNKC (62 aa). 4 disulfides stabilise this stretch: Cys-11-Cys-62, Cys-15-Cys-38, Cys-23-Cys-43, and Cys-27-Cys-45. Cysteine amide is present on Cys-62.

Expressed by the venom gland.

The protein localises to the secreted. In terms of biological role, alpha toxins bind voltage-independently at site-3 of sodium channels (Nav) and inhibit the inactivation of the activated channels, thereby blocking neuronal transmission. Is toxic to mice. This chain is Toxin Tst2, found in Tityus stigmurus (Brazilian scorpion).